Consider the following 152-residue polypeptide: Ribosome maturation factor RimP (152 aa).

This sequence belongs to the RimP family.

It localises to the cytoplasm. In terms of biological role, required for maturation of 30S ribosomal subunits. The polypeptide is Ribosome maturation factor RimP (Alkalilimnicola ehrlichii (strain ATCC BAA-1101 / DSM 17681 / MLHE-1)).